Here is a 208-residue protein sequence, read N- to C-terminus: Probable GTP-binding protein EngB (208 aa).

One can recognise an EngB-type G domain in the interval 25–199 (TGIEVAFAGR…RQKLDSWYNG (175 aa)). GTP is bound by residues 33–40 (GRSNAGKS), 60–64 (GRTQL), 78–81 (DLPG), 145–148 (TKSD), and 178–180 (FSS). Mg(2+)-binding residues include Ser-40 and Thr-62.

This sequence belongs to the TRAFAC class TrmE-Era-EngA-EngB-Septin-like GTPase superfamily. EngB GTPase family. Requires Mg(2+) as cofactor.

Its function is as follows. Necessary for normal cell division and for the maintenance of normal septation. In Enterobacter sp. (strain 638), this protein is Probable GTP-binding protein EngB.